Reading from the N-terminus, the 170-residue chain is Alpha-crystallin A chain (170 aa).

Met1 carries the post-translational modification N-acetylmethionine. Residues Met1 to Glu63 are required for complex formation with BFSP1 and BFSP2. Deamidated glutamine; partial is present on Gln6. At Ser45 the chain carries Phosphoserine. Gln50 is subject to Deamidated glutamine; partial. The sHSP domain occupies Leu52–Glu161. Lys99 carries the post-translational modification N6-acetyllysine. His100 contributes to the Zn(2+) binding site. A Deamidated asparagine; partial modification is found at Asn101. The Zn(2+) site is built by Glu102, His107, and His151. Residues Pro144–Ser170 form a disordered region. Positions Asp148 to Pro164 are enriched in basic and acidic residues. O-linked (GlcNAc) serine glycosylation occurs at Ser159.

Belongs to the small heat shock protein (HSP20) family. Heteromer composed of three CRYAA and one CRYAB subunits. Inter-subunit bridging via zinc ions enhances stability, which is crucial as there is no protein turn over in the lens. Can also form homodimers and homotetramers (dimers of dimers) which serve as the building blocks of homooligomers. Within homooligomers, the zinc-binding motif is created from residues of 3 different molecules. His-100 and Glu-102 from one molecule are ligands of the zinc ion, and His-107 and His-151 residues from additional molecules complete the site with tetrahedral coordination geometry. Part of a complex required for lens intermediate filament formation composed of BFSP1, BFSP2 and CRYAA. In terms of processing, acetylation at Lys-99 may increase chaperone activity. Undergoes age-dependent proteolytical cleavage at the C-terminus.

It is found in the cytoplasm. It localises to the nucleus. Contributes to the transparency and refractive index of the lens. Acts as a chaperone, preventing aggregation of various proteins under a wide range of stress conditions. Required for the correct formation of lens intermediate filaments as part of a complex composed of BFSP1, BFSP2 and CRYAA. This is Alpha-crystallin A chain (CRYAA) from Tamandua mexicana (Northern Tamandua).